A 353-amino-acid polypeptide reads, in one-letter code: 3'(2'),5'-bisphosphate nucleotidase 1 (353 aa).

The active-site Proton acceptor is the D46. The Mg(2+) site is built by E71, D134, I136, and D137. The active-site Proton acceptor is the T139. Positions 139, 235, 259, 262, 276, and 288 each coordinate adenosine 3',5'-bisphosphate. H235, S259, K262, R276, and D288 together coordinate AMP. D288 provides a ligand contact to Mg(2+).

This sequence belongs to the inositol monophosphatase superfamily. The cofactor is Mg(2+). In terms of tissue distribution, expressed in roots, leaves, stems, flowers and siliques.

It catalyses the reaction 3'-phosphoadenylyl sulfate + H2O = adenosine 5'-phosphosulfate + phosphate. It carries out the reaction adenosine 3',5'-bisphosphate + H2O = AMP + phosphate. The enzyme catalyses adenosine 2',5'-bisphosphate + H2O = AMP + phosphate. The catalysed reaction is 1D-myo-inositol 1,4-bisphosphate + H2O = 1D-myo-inositol 4-phosphate + phosphate. It catalyses the reaction 1D-myo-inositol 1,3,4-trisphosphate + H2O = 1D-myo-inositol 3,4-bisphosphate + phosphate. Its pathway is signal transduction; phosphatidylinositol signaling pathway. Inhibited non-competitively by Li(+) (IC(50)=0.20 mM) and Na(+) (IC(50)=200 mM). Functionally, phosphatase that converts adenosine 3'-phosphate 5'-phosphosulfate (PAPS) to adenosine 5'-phosphosulfate (APS) and 3'(2')-phosphoadenosine 5'-phosphate (PAP) to AMP. May regulate the flux of sulfur in the sulfur-activation pathway by converting PAPS to APS. May play a role in the biosynthesis of sulfate conjugates and RNA processing. Is also able to hydrolyze inositol 1,4-bisphosphate and inositol 1,3,4-trisphosphate. Could be considered as a negative regulator of abscisic acid (ABA)- and stress-responsive genes, through modulating the inositol 1,4,5-trisphosphate (IP3) turnover. Is also involved in salt tolerance. Acts as a suppressor of virus- and transgene-induced silencing. The protein is 3'(2'),5'-bisphosphate nucleotidase 1 of Arabidopsis thaliana (Mouse-ear cress).